The primary structure comprises 323 residues: tRNA N6-adenosine threonylcarbamoyltransferase (323 aa).

Residues His-105, His-109, and Tyr-126 each coordinate Fe cation. Substrate is bound by residues 126 to 130 (YVSGG), Asp-158, Gly-171, Glu-175, and Asn-255. Residue Asp-283 coordinates Fe cation.

The protein belongs to the KAE1 / TsaD family. As to quaternary structure, monomer. Component of the KEOPS complex that consists of Kae1, Bud32, Cgi121 and Pcc1; the whole complex dimerizes. Fe(2+) serves as cofactor.

It is found in the cytoplasm. It carries out the reaction L-threonylcarbamoyladenylate + adenosine(37) in tRNA = N(6)-L-threonylcarbamoyladenosine(37) in tRNA + AMP + H(+). Required for the formation of a threonylcarbamoyl group on adenosine at position 37 (t(6)A37) in tRNAs that read codons beginning with adenine. Is a component of the KEOPS complex that is probably involved in the transfer of the threonylcarbamoyl moiety of threonylcarbamoyl-AMP (TC-AMP) to the N6 group of A37. Kae1 likely plays a direct catalytic role in this reaction, but requires other protein(s) of the complex to fulfill this activity. The polypeptide is tRNA N6-adenosine threonylcarbamoyltransferase (Archaeoglobus fulgidus (strain ATCC 49558 / DSM 4304 / JCM 9628 / NBRC 100126 / VC-16)).